The following is a 233-amino-acid chain: Lactate utilization protein C (233 aa).

Belongs to the LutC/YkgG family.

Its function is as follows. Is involved in L-lactate degradation and allows cells to grow with lactate as the sole carbon source. This Oceanobacillus iheyensis (strain DSM 14371 / CIP 107618 / JCM 11309 / KCTC 3954 / HTE831) protein is Lactate utilization protein C.